We begin with the raw amino-acid sequence, 141 residues long: Phage-like element PBSX protein XkdS (141 aa).

It to B.subtilis YqbS.

This is Phage-like element PBSX protein XkdS (xkdS) from Bacillus subtilis (strain 168).